Here is a 377-residue protein sequence, read N- to C-terminus: Nitric oxide reductase FlRd-NAD(+) reductase (377 aa).

Belongs to the FAD-dependent oxidoreductase family. FAD serves as cofactor.

It is found in the cytoplasm. The catalysed reaction is 2 reduced [nitric oxide reductase rubredoxin domain] + NAD(+) + H(+) = 2 oxidized [nitric oxide reductase rubredoxin domain] + NADH. The protein operates within nitrogen metabolism; nitric oxide reduction. In terms of biological role, one of at least two accessory proteins for anaerobic nitric oxide (NO) reductase. Reduces the rubredoxin moiety of NO reductase. The protein is Nitric oxide reductase FlRd-NAD(+) reductase of Escherichia coli (strain K12 / MC4100 / BW2952).